The primary structure comprises 118 residues: UPF0102 protein STH1475 (118 aa).

The protein belongs to the UPF0102 family.

In Symbiobacterium thermophilum (strain DSM 24528 / JCM 14929 / IAM 14863 / T), this protein is UPF0102 protein STH1475.